The chain runs to 379 residues: Cytochrome b (379 aa).

4 helical membrane passes run 33-53 (FGSL…FLAM), 77-98 (WLIR…YIHI), 113-133 (WNIG…GYVL), and 178-198 (FFAF…VHLL). Positions 83 and 97 each coordinate heme b. The heme b site is built by H182 and H196. An a ubiquinone-binding site is contributed by H201. Transmembrane regions (helical) follow at residues 226-246 (TKDF…VLYF), 288-308 (LGGV…PYIH), 320-340 (ISQF…WIGG), and 347-367 (FIII…IXMX).

It belongs to the cytochrome b family. In terms of assembly, the cytochrome bc1 complex contains 11 subunits: 3 respiratory subunits (MT-CYB, CYC1 and UQCRFS1), 2 core proteins (UQCRC1 and UQCRC2) and 6 low-molecular weight proteins (UQCRH/QCR6, UQCRB/QCR7, UQCRQ/QCR8, UQCR10/QCR9, UQCR11/QCR10 and a cleavage product of UQCRFS1). This cytochrome bc1 complex then forms a dimer. Requires heme b as cofactor.

Its subcellular location is the mitochondrion inner membrane. Functionally, component of the ubiquinol-cytochrome c reductase complex (complex III or cytochrome b-c1 complex) that is part of the mitochondrial respiratory chain. The b-c1 complex mediates electron transfer from ubiquinol to cytochrome c. Contributes to the generation of a proton gradient across the mitochondrial membrane that is then used for ATP synthesis. The chain is Cytochrome b (MT-CYB) from Thomomys umbrinus (Southern pocket gopher).